The following is a 431-amino-acid chain: Glutamate-1-semialdehyde 2,1-aminomutase (431 aa).

Residue Lys-265 is modified to N6-(pyridoxal phosphate)lysine.

The protein belongs to the class-III pyridoxal-phosphate-dependent aminotransferase family. HemL subfamily. Homodimer. Pyridoxal 5'-phosphate serves as cofactor.

It is found in the cytoplasm. The catalysed reaction is (S)-4-amino-5-oxopentanoate = 5-aminolevulinate. It functions in the pathway porphyrin-containing compound metabolism; protoporphyrin-IX biosynthesis; 5-aminolevulinate from L-glutamyl-tRNA(Glu): step 2/2. The polypeptide is Glutamate-1-semialdehyde 2,1-aminomutase (Aliivibrio fischeri (strain MJ11) (Vibrio fischeri)).